The following is a 330-amino-acid chain: Aspartate--ammonia ligase (330 aa).

The protein belongs to the class-II aminoacyl-tRNA synthetase family. AsnA subfamily.

The protein localises to the cytoplasm. It catalyses the reaction L-aspartate + NH4(+) + ATP = L-asparagine + AMP + diphosphate + H(+). It functions in the pathway amino-acid biosynthesis; L-asparagine biosynthesis; L-asparagine from L-aspartate (ammonia route): step 1/1. The protein is Aspartate--ammonia ligase of Escherichia coli (strain SMS-3-5 / SECEC).